The primary structure comprises 183 residues: Glutamyl-tRNA(Gln) amidotransferase subunit F, mitochondrial (183 aa).

The protein belongs to the GatF family. As to quaternary structure, subunit of the heterotrimeric GatFAB amidotransferase (AdT) complex, composed of A (HER2), B (PET112) and F (YGR102C) subunits.

It localises to the mitochondrion inner membrane. The catalysed reaction is L-glutamyl-tRNA(Gln) + L-glutamine + ATP + H2O = L-glutaminyl-tRNA(Gln) + L-glutamate + ADP + phosphate + H(+). In terms of biological role, allows the formation of correctly charged Gln-tRNA(Gln) through the transamidation of misacylated Glu-tRNA(Gln) in the mitochondria. The reaction takes place in the presence of glutamine and ATP through an activated gamma-phospho-Glu-tRNA(Gln). Required for proper protein synthesis within the mitochondrion. In Saccharomyces cerevisiae (strain ATCC 204508 / S288c) (Baker's yeast), this protein is Glutamyl-tRNA(Gln) amidotransferase subunit F, mitochondrial.